The primary structure comprises 185 residues: MIEETLLEAEEKMDKAVEVAKEDFASIRTGRANPGLYNRVLVDYYGSPTPLQQLASFAIPDARTILITPFDKTALRDIERALSDSEVGANPSNDGNVIRITIPELTKERRKEYVKIVKTKGEDAKVSIRNIRRKAKEALDRLVKDGEAGEDEGTRAEKELDGLTKAHVDGIDELLKRKEAELLEV.

The protein belongs to the RRF family.

The protein localises to the cytoplasm. In terms of biological role, responsible for the release of ribosomes from messenger RNA at the termination of protein biosynthesis. May increase the efficiency of translation by recycling ribosomes from one round of translation to another. The protein is Ribosome-recycling factor of Pseudarthrobacter chlorophenolicus (strain ATCC 700700 / DSM 12829 / CIP 107037 / JCM 12360 / KCTC 9906 / NCIMB 13794 / A6) (Arthrobacter chlorophenolicus).